Consider the following 208-residue polypeptide: Ribosomal RNA large subunit methyltransferase E (208 aa).

S-adenosyl-L-methionine is bound by residues G62, W64, D82, D98, and D123. K163 serves as the catalytic Proton acceptor.

It belongs to the class I-like SAM-binding methyltransferase superfamily. RNA methyltransferase RlmE family.

It is found in the cytoplasm. The catalysed reaction is uridine(2552) in 23S rRNA + S-adenosyl-L-methionine = 2'-O-methyluridine(2552) in 23S rRNA + S-adenosyl-L-homocysteine + H(+). Functionally, specifically methylates the uridine in position 2552 of 23S rRNA at the 2'-O position of the ribose in the fully assembled 50S ribosomal subunit. In Actinobacillus pleuropneumoniae serotype 5b (strain L20), this protein is Ribosomal RNA large subunit methyltransferase E.